Here is a 300-residue protein sequence, read N- to C-terminus: Quinolinate synthase (300 aa).

The iminosuccinate site is built by histidine 21 and serine 38. Position 83 (cysteine 83) interacts with [4Fe-4S] cluster. Iminosuccinate is bound by residues 109–111 and serine 126; that span reads YVN. Residue cysteine 170 participates in [4Fe-4S] cluster binding. Iminosuccinate contacts are provided by residues 196–198 and threonine 213; that span reads HPE. Cysteine 256 is a binding site for [4Fe-4S] cluster.

It belongs to the quinolinate synthase family. Type 2 subfamily. Monomer. Homodimer. [4Fe-4S] cluster serves as cofactor.

Its subcellular location is the cytoplasm. The enzyme catalyses iminosuccinate + dihydroxyacetone phosphate = quinolinate + phosphate + 2 H2O + H(+). Its pathway is cofactor biosynthesis; NAD(+) biosynthesis; quinolinate from iminoaspartate: step 1/1. Functionally, catalyzes the condensation of iminoaspartate with dihydroxyacetone phosphate to form quinolinate. This is Quinolinate synthase from Pyrococcus horikoshii (strain ATCC 700860 / DSM 12428 / JCM 9974 / NBRC 100139 / OT-3).